The primary structure comprises 65 residues: Large ribosomal subunit protein bL35 (65 aa).

The protein belongs to the bacterial ribosomal protein bL35 family.

This Heliobacterium modesticaldum (strain ATCC 51547 / Ice1) protein is Large ribosomal subunit protein bL35.